We begin with the raw amino-acid sequence, 240 residues long: MRPSYFISDLHLSEKHPELTELLLRFLRSAAAGQARAVYILGDLFDFWVGDDEVSELNTSVAREIRKLSDKGVAVFFVRGNRDFLIGRDFCRQAGMTLLPDYSVLDLFGSNTLICHGDTLCTDDKAYLRFRRIVHCRRLQKLFLMLPLKWRTRLAAKIRRVSKMEKQVKPADIMDVNAAFTARQVRAFNAERLIHGHTHREHIHHENGFTRIVLGDWHNDYASILRVDGDGAVFVPPEEC.

5 residues coordinate Mn(2+): Asp-9, His-11, Asp-43, Asn-81, and His-116. 81–82 serves as a coordination point for substrate; the sequence is NR. The substrate site is built by Asp-124, Ser-162, Lys-166, Lys-169, and His-197. Mn(2+) is bound by residues His-197 and His-199.

This sequence belongs to the LpxH family. It depends on Mn(2+) as a cofactor.

It localises to the cell inner membrane. The catalysed reaction is UDP-2-N,3-O-bis[(3R)-3-hydroxytetradecanoyl]-alpha-D-glucosamine + H2O = 2-N,3-O-bis[(3R)-3-hydroxytetradecanoyl]-alpha-D-glucosaminyl 1-phosphate + UMP + 2 H(+). The protein operates within glycolipid biosynthesis; lipid IV(A) biosynthesis; lipid IV(A) from (3R)-3-hydroxytetradecanoyl-[acyl-carrier-protein] and UDP-N-acetyl-alpha-D-glucosamine: step 4/6. Hydrolyzes the pyrophosphate bond of UDP-2,3-diacylglucosamine to yield 2,3-diacylglucosamine 1-phosphate (lipid X) and UMP by catalyzing the attack of water at the alpha-P atom. Involved in the biosynthesis of lipid A, a phosphorylated glycolipid that anchors the lipopolysaccharide to the outer membrane of the cell. This is UDP-2,3-diacylglucosamine hydrolase from Neisseria gonorrhoeae (strain ATCC 700825 / FA 1090).